A 170-amino-acid polypeptide reads, in one-letter code: ATP synthase subunit b (170 aa).

A helical membrane pass occupies residues 15-37; that stretch reads FNLFETNILNWAVVVFGLYKFLP.

Belongs to the ATPase B chain family. In terms of assembly, F-type ATPases have 2 components, F(1) - the catalytic core - and F(0) - the membrane proton channel. F(1) has five subunits: alpha(3), beta(3), gamma(1), delta(1), epsilon(1). F(0) has four main subunits: a(1), b(1), b'(1) and c(10-14). The alpha and beta chains form an alternating ring which encloses part of the gamma chain. F(1) is attached to F(0) by a central stalk formed by the gamma and epsilon chains, while a peripheral stalk is formed by the delta, b and b' chains.

The protein resides in the cellular thylakoid membrane. In terms of biological role, f(1)F(0) ATP synthase produces ATP from ADP in the presence of a proton or sodium gradient. F-type ATPases consist of two structural domains, F(1) containing the extramembraneous catalytic core and F(0) containing the membrane proton channel, linked together by a central stalk and a peripheral stalk. During catalysis, ATP synthesis in the catalytic domain of F(1) is coupled via a rotary mechanism of the central stalk subunits to proton translocation. Functionally, component of the F(0) channel, it forms part of the peripheral stalk, linking F(1) to F(0). The protein is ATP synthase subunit b of Prochlorococcus marinus (strain MIT 9312).